The sequence spans 215 residues: Orotate phosphoribosyltransferase (215 aa).

K26 contacts 5-phospho-alpha-D-ribose 1-diphosphate. 34–35 is an orotate binding site; the sequence is FF. 5-phospho-alpha-D-ribose 1-diphosphate-binding positions include 72–73, R99, K100, K103, H105, and 124–132; these read YK and DDVITAGTA. Orotate contacts are provided by T128 and R156.

The protein belongs to the purine/pyrimidine phosphoribosyltransferase family. PyrE subfamily. Homodimer. Mg(2+) is required as a cofactor.

It carries out the reaction orotidine 5'-phosphate + diphosphate = orotate + 5-phospho-alpha-D-ribose 1-diphosphate. It participates in pyrimidine metabolism; UMP biosynthesis via de novo pathway; UMP from orotate: step 1/2. Its function is as follows. Catalyzes the transfer of a ribosyl phosphate group from 5-phosphoribose 1-diphosphate to orotate, leading to the formation of orotidine monophosphate (OMP). This Hahella chejuensis (strain KCTC 2396) protein is Orotate phosphoribosyltransferase.